A 381-amino-acid chain; its full sequence is NAD-dependent methanol dehydrogenase (381 aa).

This sequence belongs to the iron-containing alcohol dehydrogenase family. As to quaternary structure, homodecamer. Requires Mg(2+) as cofactor. Zn(2+) serves as cofactor.

It is found in the cytoplasm. It carries out the reaction methanol + NAD(+) = formaldehyde + NADH + H(+). It functions in the pathway one-carbon metabolism; methanol degradation; formaldehyde from methanol: step 1/1. Stimulated by the activator protein Act which requires the presence of magnesium ions. Inhibited by 1,10-phenanthroline. Functionally, catalyzes the oxidation of methanol to yield formaldehyde. It possesses a NADH-dependent formaldehyde reductase activity and cannot use NADP. This chain is NAD-dependent methanol dehydrogenase, found in Bacillus methanolicus.